The primary structure comprises 217 residues: 3,4-dihydroxy-2-butanone 4-phosphate synthase (217 aa).

D-ribulose 5-phosphate contacts are provided by residues 40-41, Asp-45, 153-157, and Glu-177; these read RE and RRGHT. Glu-41 contacts Mg(2+). His-156 contacts Mg(2+).

The protein belongs to the DHBP synthase family. Homodimer. Mg(2+) serves as cofactor. It depends on Mn(2+) as a cofactor.

It carries out the reaction D-ribulose 5-phosphate = (2S)-2-hydroxy-3-oxobutyl phosphate + formate + H(+). It participates in cofactor biosynthesis; riboflavin biosynthesis; 2-hydroxy-3-oxobutyl phosphate from D-ribulose 5-phosphate: step 1/1. Functionally, catalyzes the conversion of D-ribulose 5-phosphate to formate and 3,4-dihydroxy-2-butanone 4-phosphate. This is 3,4-dihydroxy-2-butanone 4-phosphate synthase from Aliivibrio fischeri (Vibrio fischeri).